We begin with the raw amino-acid sequence, 202 residues long: GPI-anchored hemophore cfmB (202 aa).

Residues 1 to 18 (MHFSRTSLILFAAGLASA) form the signal peptide. The region spanning 19–108 (QLPNVPGCSL…STTASETATT (90 aa)) is the CFEM domain. Cystine bridges form between C26-C67, C30-C62, C40-C48, and C50-C83. D45 serves as a coordination point for heme. The interval 94–171 (PVGAASTTAS…PSSQSTSASA (78 aa)) is disordered. The segment covering 97–171 (AASTTASETA…PSSQSTSASA (75 aa)) has biased composition (low complexity). Residue N180 is the site of GPI-anchor amidated asparagine attachment. The propeptide at 181–202 (AGSEKANVAGVVAVAAAALYLL) is removed in mature form.

The protein belongs to the RBT5 family. In terms of processing, the GPI-anchor is attached to the protein in the endoplasmic reticulum and serves to target the protein to the cell surface. There, the glucosamine-inositol phospholipid moiety is cleaved off and the GPI-modified mannoprotein is covalently attached via its lipidless GPI glycan remnant to the 1,6-beta-glucan of the outer cell wall layer.

It localises to the secreted. The protein resides in the cell wall. Its subcellular location is the cell membrane. GPI-anchored cell wall protein involved in stabilizing the cell wall. Not implicated in virulence, heme uptake and biofilm formation. This is GPI-anchored hemophore cfmB from Aspergillus fumigatus (strain ATCC MYA-4609 / CBS 101355 / FGSC A1100 / Af293) (Neosartorya fumigata).